We begin with the raw amino-acid sequence, 248 residues long: Protein FAM133A (248 aa).

Over residues 68 to 80 (NWKKELEKSREKL) the composition is skewed to basic and acidic residues. The segment at 68-248 (NWKKELEKSR…KKSGSSHKSR (181 aa)) is disordered. Positions 90-102 (KRERKKKRKKKSC) are enriched in basic residues. The span at 103-118 (RSSSSSSSSDSSSSSS) shows a compositional bias: low complexity. The segment covering 127–138 (QGKRRKKKKNRS) has biased composition (basic residues). Basic and acidic residues-rich tracts occupy residues 147–156 (HESESESKES), 163–175 (SKDE…DVRS), and 211–220 (RCEEREQAKE). Residues 221–248 (KVKKKKKKQHKKHSKKKKKKSGSSHKSR) show a composition bias toward basic residues.

Belongs to the FAM133 family.

The sequence is that of Protein FAM133A (FAM133A) from Homo sapiens (Human).